The following is a 212-amino-acid chain: Small ribosomal subunit protein eS1 (212 aa).

The protein belongs to the eukaryotic ribosomal protein eS1 family.

This chain is Small ribosomal subunit protein eS1, found in Staphylothermus marinus (strain ATCC 43588 / DSM 3639 / JCM 9404 / F1).